The following is a 419-amino-acid chain: UDP-N-acetylglucosamine 1-carboxyvinyltransferase (419 aa).

22 to 23 (KN) contributes to the phosphoenolpyruvate binding site. Position 91 (Arg91) interacts with UDP-N-acetyl-alpha-D-glucosamine. The Proton donor role is filled by Cys115. Cys115 carries the 2-(S-cysteinyl)pyruvic acid O-phosphothioketal modification. UDP-N-acetyl-alpha-D-glucosamine-binding positions include 120–124 (RPVDL), 160–163 (KVSV), Asp305, and Val327.

The protein belongs to the EPSP synthase family. MurA subfamily.

It localises to the cytoplasm. It catalyses the reaction phosphoenolpyruvate + UDP-N-acetyl-alpha-D-glucosamine = UDP-N-acetyl-3-O-(1-carboxyvinyl)-alpha-D-glucosamine + phosphate. The protein operates within cell wall biogenesis; peptidoglycan biosynthesis. Cell wall formation. Adds enolpyruvyl to UDP-N-acetylglucosamine. This is UDP-N-acetylglucosamine 1-carboxyvinyltransferase from Shigella sonnei (strain Ss046).